The primary structure comprises 158 residues: UPF0262 protein Rsph17025_0594 (158 aa).

Belongs to the UPF0262 family.

In Cereibacter sphaeroides (strain ATCC 17025 / ATH 2.4.3) (Rhodobacter sphaeroides), this protein is UPF0262 protein Rsph17025_0594.